Here is a 154-residue protein sequence, read N- to C-terminus: MTASVDLSSYRDQHFKGSRSEQERSLRDSTTLYVGNLSFYTTEEQIHELFSRCGDVRIIVMGLDKYKKTPCGFCFVEYYTRAEAEAAMRFVNGTRLDDRLIRVDWDAGFIEGRQYGRGKTGGQVRDEYRTDYDAGRGGYGKLLSQKIAPNTDNR.

The tract at residues 1–23 is disordered; the sequence is MTASVDLSSYRDQHFKGSRSEQE. Basic and acidic residues predominate over residues 9–23; that stretch reads SYRDQHFKGSRSEQE. MRNA contacts are provided by residues Y10, Y33, 102–106, 113–117, and 123–124; these read RVDWD, RQYGR, and QV. An RRM domain is found at 30 to 108; sequence TTLYVGNLSF…RLIRVDWDAG (79 aa).

Belongs to the RRM NCBP2 family. As to quaternary structure, component of the nuclear cap-binding complex (CBC), a heterodimer composed of Cbp80 and Cbp20 that interacts with m7GpppG-capped RNA. Interacts with Ars2.

It localises to the nucleus. Functionally, component of the cap-binding complex (CBC), which binds co-transcriptionally to the 5' cap of pre-mRNAs and is involved in various processes such as pre-mRNA splicing and RNA-mediated gene silencing (RNAi). The CBC complex is involved in miRNA-mediated RNA interference via its interaction with Ars2 and is required for primary microRNAs (miRNAs) processing. Also involved in innate immunity via the short interfering RNAs (siRNAs) processing machinery by restricting the viral RNA production. In the CBC complex, Cbp20 recognizes and binds capped RNAs (m7GpppG-capped RNA) but requires Cbp80 to stabilize the movement of its N-terminal loop and lock the CBC into a high affinity cap-binding state with the cap structure. This Drosophila grimshawi (Hawaiian fruit fly) protein is Nuclear cap-binding protein subunit 2 (Cbp20).